Reading from the N-terminus, the 190-residue chain is Abscisic acid receptor PYL2 (190 aa).

The START-like stretch occupies residues Phe28–Thr182. Residues Lys64, Ala93–Glu98, Arg120–Ser126, and Glu147 contribute to the abscisate site. Residues Ser89–Ala93 carry the Gate loop motif. Positions His119 to Leu121 match the Latch loop motif.

This sequence belongs to the PYR/PYL/RCAR abscisic acid intracellular receptor family. Homodimer. Binds ABA on one subunit only. Interacts with HAB1, ABI1 and ABI2, and possibly with other PP2Cs. Binds to CARs protein in an ABA-independent manner, both at the plasma membrane and in the nucleus.

It is found in the cytoplasm. The protein resides in the nucleus. Its subcellular location is the cell membrane. Receptor for abscisic acid (ABA) required for ABA-mediated responses such as stomatal closure and germination inhibition. Inhibits the activity of group-A protein phosphatases type 2C (PP2Cs) when activated by ABA. Can be activated by both (-)-ABA and (+)-ABA. In Arabidopsis thaliana (Mouse-ear cress), this protein is Abscisic acid receptor PYL2 (PYL2).